The primary structure comprises 277 residues: Phosphoribosylaminoimidazole-succinocarboxamide synthase (277 aa).

This sequence belongs to the SAICAR synthetase family.

The enzyme catalyses 5-amino-1-(5-phospho-D-ribosyl)imidazole-4-carboxylate + L-aspartate + ATP = (2S)-2-[5-amino-1-(5-phospho-beta-D-ribosyl)imidazole-4-carboxamido]succinate + ADP + phosphate + 2 H(+). It functions in the pathway purine metabolism; IMP biosynthesis via de novo pathway; 5-amino-1-(5-phospho-D-ribosyl)imidazole-4-carboxamide from 5-amino-1-(5-phospho-D-ribosyl)imidazole-4-carboxylate: step 1/2. The chain is Phosphoribosylaminoimidazole-succinocarboxamide synthase from Salinispora arenicola (strain CNS-205).